Here is a 341-residue protein sequence, read N- to C-terminus: GTPase Obg (341 aa).

The Obg domain occupies 1 to 159 (MKFLDQAKIY…RTIWLRLKLI (159 aa)). Residues 160 to 327 (ADAGLVGLPN…TLRQLARIID (168 aa)) form the OBG-type G domain. GTP-binding positions include 166–173 (GLPNAGKS), 191–195 (FTTLH), 212–215 (DIPG), 279–282 (SQVD), and 308–310 (SAV). 2 residues coordinate Mg(2+): serine 173 and threonine 193.

The protein belongs to the TRAFAC class OBG-HflX-like GTPase superfamily. OBG GTPase family. As to quaternary structure, monomer. Mg(2+) serves as cofactor.

The protein resides in the cytoplasm. An essential GTPase which binds GTP, GDP and possibly (p)ppGpp with moderate affinity, with high nucleotide exchange rates and a fairly low GTP hydrolysis rate. Plays a role in control of the cell cycle, stress response, ribosome biogenesis and in those bacteria that undergo differentiation, in morphogenesis control. This is GTPase Obg from Brucella abortus biovar 1 (strain 9-941).